We begin with the raw amino-acid sequence, 67 residues long: Protein Tpau_2998 (67 aa).

The chain is Protein Tpau_2998 from Tsukamurella paurometabola (strain ATCC 8368 / DSM 20162 / CCUG 35730 / CIP 100753 / JCM 10117 / KCTC 9821 / NBRC 16120 / NCIMB 702349 / NCTC 13040) (Corynebacterium paurometabolum).